A 628-amino-acid chain; its full sequence is Chaperone protein HtpG (628 aa).

An a; substrate-binding region spans residues 1-337; it reads MSEKKYTFET…SADLPLNVSR (337 aa). The interval 338 to 554 is b; the sequence is EILQHNKVID…DYGMSLHMQK (217 aa). The interval 555-628 is c; that stretch reads MMEEAGQSFM…FVKLVNKYIR (74 aa).

Belongs to the heat shock protein 90 family. As to quaternary structure, homodimer.

The protein localises to the cytoplasm. Functionally, molecular chaperone. Has ATPase activity. The polypeptide is Chaperone protein HtpG (Francisella tularensis subsp. tularensis (strain WY96-3418)).